The following is a 192-amino-acid chain: dTDP-3-amino-3,6-dideoxy-alpha-D-galactopyranose 3-N-acetyltransferase (192 aa).

It belongs to the transferase hexapeptide repeat family.

The catalysed reaction is dTDP-3-amino-3,6-dideoxy-alpha-D-galactopyranose + acetyl-CoA = dTDP-3-acetamido-3,6-dideoxy-alpha-D-galactopyranose + CoA + H(+). Catalyzes the transfer of an acetyl group to dTDP-D-Fucp3N to form dTDP-D-Fucp3NAc in the biosynthesis of dTDP-3-acetamido-3,6-dideoxy-alpha-D-galactose, a glycan chain of the S-layer. The chain is dTDP-3-amino-3,6-dideoxy-alpha-D-galactopyranose 3-N-acetyltransferase (fdtC) from Aneurinibacillus thermoaerophilus.